The chain runs to 277 residues: NAD kinase (277 aa).

D67 serves as the catalytic Proton acceptor. Residues 67–68 (DG), R72, 137–138 (NE), K148, R165, D167, 178–183 (TGYAMS), L202, and Q236 each bind NAD(+).

This sequence belongs to the NAD kinase family. Requires a divalent metal cation as cofactor.

Its subcellular location is the cytoplasm. It catalyses the reaction NAD(+) + ATP = ADP + NADP(+) + H(+). Functionally, involved in the regulation of the intracellular balance of NAD and NADP, and is a key enzyme in the biosynthesis of NADP. Catalyzes specifically the phosphorylation on 2'-hydroxyl of the adenosine moiety of NAD to yield NADP. The chain is NAD kinase from Pyrococcus furiosus (strain ATCC 43587 / DSM 3638 / JCM 8422 / Vc1).